The following is a 354-amino-acid chain: Uroporphyrinogen decarboxylase (354 aa).

Substrate is bound by residues 27–31 (RQAGR), Asp77, Tyr154, Ser209, and His327.

The protein belongs to the uroporphyrinogen decarboxylase family. In terms of assembly, homodimer.

It is found in the cytoplasm. The enzyme catalyses uroporphyrinogen III + 4 H(+) = coproporphyrinogen III + 4 CO2. It participates in porphyrin-containing compound metabolism; protoporphyrin-IX biosynthesis; coproporphyrinogen-III from 5-aminolevulinate: step 4/4. Its function is as follows. Catalyzes the decarboxylation of four acetate groups of uroporphyrinogen-III to yield coproporphyrinogen-III. The sequence is that of Uroporphyrinogen decarboxylase from Shewanella putrefaciens (strain CN-32 / ATCC BAA-453).